The following is a 312-amino-acid chain: Aspartate carbamoyltransferase catalytic subunit (312 aa).

2 residues coordinate carbamoyl phosphate: Arg-58 and Thr-59. Lys-86 provides a ligand contact to L-aspartate. The carbamoyl phosphate site is built by Arg-108, His-136, and Gln-139. Residues Arg-169 and Arg-223 each coordinate L-aspartate. Carbamoyl phosphate is bound by residues Gly-264 and Pro-265.

This sequence belongs to the aspartate/ornithine carbamoyltransferase superfamily. ATCase family. As to quaternary structure, heterododecamer (2C3:3R2) of six catalytic PyrB chains organized as two trimers (C3), and six regulatory PyrI chains organized as three dimers (R2).

The enzyme catalyses carbamoyl phosphate + L-aspartate = N-carbamoyl-L-aspartate + phosphate + H(+). It functions in the pathway pyrimidine metabolism; UMP biosynthesis via de novo pathway; (S)-dihydroorotate from bicarbonate: step 2/3. Its function is as follows. Catalyzes the condensation of carbamoyl phosphate and aspartate to form carbamoyl aspartate and inorganic phosphate, the committed step in the de novo pyrimidine nucleotide biosynthesis pathway. The polypeptide is Aspartate carbamoyltransferase catalytic subunit (Desulforamulus reducens (strain ATCC BAA-1160 / DSM 100696 / MI-1) (Desulfotomaculum reducens)).